Here is a 95-residue protein sequence, read N- to C-terminus: CRISPR-associated endoribonuclease Cas2 (95 aa).

Asp10 contacts Mg(2+).

Belongs to the CRISPR-associated endoribonuclease Cas2 protein family. As to quaternary structure, homodimer, forms a heterotetramer with a Cas1 homodimer. Requires Mg(2+) as cofactor.

Its function is as follows. CRISPR (clustered regularly interspaced short palindromic repeat), is an adaptive immune system that provides protection against mobile genetic elements (viruses, transposable elements and conjugative plasmids). CRISPR clusters contain sequences complementary to antecedent mobile elements and target invading nucleic acids. CRISPR clusters are transcribed and processed into CRISPR RNA (crRNA). Functions as a ssRNA-specific endoribonuclease. Involved in the integration of spacer DNA into the CRISPR cassette. The chain is CRISPR-associated endoribonuclease Cas2 from Geobacter sulfurreducens (strain ATCC 51573 / DSM 12127 / PCA).